Reading from the N-terminus, the 335-residue chain is Expansin-like protein 3 (335 aa).

The first 20 residues, 1 to 20, serve as a signal peptide directing secretion; it reads MKFNTIFLVLSIVKFILISA. Topologically, residues 21 to 314 are extracellular; that stretch reads QSCPFSQSII…LNENENIESN (294 aa). The 101-residue stretch at 43-143 folds into the Expansin-like EG45 domain; it reads AGNCGFEKLN…VKVPCEVSGN (101 aa). 2 disulfides stabilise this stretch: Cys-46–Cys-76 and Cys-79–Cys-138. A glycan (N-linked (GlcNAc...) asparagine) is linked at Asn-87. Residues 247 to 276 form a disordered region; the sequence is YKPQTFNSQQTSNNQNSNTQTPTKQPSPNS. The span at 249 to 272 shows a compositional bias: low complexity; sequence PQTFNSQQTSNNQNSNTQTPTKQP. Residues 315 to 335 traverse the membrane as a helical segment; that stretch reads SLKLLPNFLLLILIILLNINF.

Belongs to the expansin family. Expansin A subfamily.

It is found in the membrane. May serve to lubricate the movement of the cellulose microfibrils during cell growth and wall extension and/or may serve to maintain the fluid state of the slug cell wall. The chain is Expansin-like protein 3 (expl3) from Dictyostelium discoideum (Social amoeba).